Here is a 503-residue protein sequence, read N- to C-terminus: Sarpagan bridge enzyme 1 (503 aa).

Residues 3–23 (ISVTTSIALATIVFFLYKLAT) traverse the membrane as a helical; Signal-anchor for type II membrane protein segment. Cysteine 442 lines the heme pocket.

The protein belongs to the cytochrome P450 family. Heme serves as cofactor. In terms of tissue distribution, highly expressed in roots. Expressed at low levels in leaves, stems and flowers.

The protein resides in the endoplasmic reticulum membrane. It catalyses the reaction (19E)-geissoschizine + reduced [NADPH--hemoprotein reductase] + O2 = polyneuridine aldehyde + oxidized [NADPH--hemoprotein reductase] + 2 H2O + H(+). The enzyme catalyses tetrahydroalstonine + A + reduced [NADPH--hemoprotein reductase] + O2 = alstonine + AH2 + oxidized [NADPH--hemoprotein reductase] + 2 H2O + H(+). It carries out the reaction ajmalicine + A + reduced [NADPH--hemoprotein reductase] + O2 = serpentine + AH2 + oxidized [NADPH--hemoprotein reductase] + 2 H2O + H(+). It functions in the pathway alkaloid biosynthesis; ajmaline biosynthesis. Its function is as follows. Monooxygenase involved in the biosynthesis of ajmaline-type monoterpenoid indole alkaloids (MIAs) natural products, important plant-derived pharmaceuticals used in the therapy of heart disorders. Converts by cyclization the strictosidine-derived geissoschizine to the sarpagan alkaloid polyneuridine aldehyde, precursor of vomilenine, an intermediate chemical in the biosynthesis of ajmaline. Converts by aromatization the tetrahydro-beta-carboline alkaloids tetrahydroalstonine and ajmalicine to the corresponding beta-carboline alkaloids alstonine and serpentine, respectively. The polypeptide is Sarpagan bridge enzyme 1 (Rauvolfia serpentina (Serpentine wood)).